A 180-amino-acid polypeptide reads, in one-letter code: Crossover junction endodeoxyribonuclease RuvC (180 aa).

Catalysis depends on residues aspartate 7, glutamate 66, and aspartate 138. Mg(2+) is bound by residues aspartate 7, glutamate 66, and aspartate 138.

It belongs to the RuvC family. Homodimer which binds Holliday junction (HJ) DNA. The HJ becomes 2-fold symmetrical on binding to RuvC with unstacked arms; it has a different conformation from HJ DNA in complex with RuvA. In the full resolvosome a probable DNA-RuvA(4)-RuvB(12)-RuvC(2) complex forms which resolves the HJ. Requires Mg(2+) as cofactor.

The protein localises to the cytoplasm. It carries out the reaction Endonucleolytic cleavage at a junction such as a reciprocal single-stranded crossover between two homologous DNA duplexes (Holliday junction).. Functionally, the RuvA-RuvB-RuvC complex processes Holliday junction (HJ) DNA during genetic recombination and DNA repair. Endonuclease that resolves HJ intermediates. Cleaves cruciform DNA by making single-stranded nicks across the HJ at symmetrical positions within the homologous arms, yielding a 5'-phosphate and a 3'-hydroxyl group; requires a central core of homology in the junction. The consensus cleavage sequence is 5'-(A/T)TT(C/G)-3'. Cleavage occurs on the 3'-side of the TT dinucleotide at the point of strand exchange. HJ branch migration catalyzed by RuvA-RuvB allows RuvC to scan DNA until it finds its consensus sequence, where it cleaves and resolves the cruciform DNA. The sequence is that of Crossover junction endodeoxyribonuclease RuvC from Burkholderia thailandensis (strain ATCC 700388 / DSM 13276 / CCUG 48851 / CIP 106301 / E264).